Consider the following 161-residue polypeptide: Small ribosomal subunit protein eS6 (161 aa).

Residues 119–161 (VLLGEEEPEDADDDGDSDVDADEATDTDAGSEEDNDDDIADAE) are disordered. Over residues 122–161 (GEEEPEDADDDGDSDVDADEATDTDAGSEEDNDDDIADAE) the composition is skewed to acidic residues.

Belongs to the eukaryotic ribosomal protein eS6 family.

The polypeptide is Small ribosomal subunit protein eS6 (Haloquadratum walsbyi (strain DSM 16790 / HBSQ001)).